A 640-amino-acid chain; its full sequence is Tyrosine--tRNA ligase, mitochondrial (640 aa).

Residue tyrosine 100 participates in L-tyrosine binding. ATP is bound at residue aspartate 104. Residues 105–114 (PTAPSLHIGH) carry the 'HIGH' region motif. L-tyrosine contacts are provided by aspartate 144, tyrosine 248, glutamine 252, aspartate 255, and glutamine 274. A 'KMSKS' region motif is present at residues 322-326 (KFGKS). Position 325 (lysine 325) interacts with ATP.

It belongs to the class-I aminoacyl-tRNA synthetase family.

Its subcellular location is the mitochondrion matrix. It carries out the reaction tRNA(Tyr) + L-tyrosine + ATP = L-tyrosyl-tRNA(Tyr) + AMP + diphosphate + H(+). Has both an aminoacyl-tRNA synthetase activity and is involved in the splicing of group I introns. The chain is Tyrosine--tRNA ligase, mitochondrial (YTS1) from Podospora anserina (Pleurage anserina).